A 63-amino-acid chain; its full sequence is Venom peptide U-reduvitoxin-Pp19 (63 aa).

An N-terminal signal peptide occupies residues 1 to 23 (MSPYSILFVVVIALCLLPESIVG). 3 disulfide bridges follow: Cys-15-Cys-62, Cys-25-Cys-53, and Cys-30-Cys-61.

In terms of tissue distribution, hemolymph (at protein level). Also weakly expressed by the venom gland (at protein level).

The protein localises to the secreted. In terms of biological role, toxin with insecticidal activity. High doses of recombinant toxin causes impaired motor behavior of D.melanogaster, which progress slowly to paralysis and death after several hours. The chain is Venom peptide U-reduvitoxin-Pp19 from Pristhesancus plagipennis (Common assassin bug).